The chain runs to 337 residues: Ketol-acid reductoisomerase (NADP(+)) (337 aa).

In terms of domain architecture, KARI N-terminal Rossmann spans 1 to 180; it reads MFYEKDADVD…GGGKSGIIET (180 aa). NADP(+) is bound by residues 22–25, R46, S49, S51, and 81–84; these read YGSQ and DELQ. Residue H106 is part of the active site. G132 provides a ligand contact to NADP(+). Residues 181–326 enclose the KARI C-terminal knotted domain; it reads TFKDECETDL…AELRAMMPWI (146 aa). D189, E193, E225, and E229 together coordinate Mg(2+). S250 lines the substrate pocket.

It belongs to the ketol-acid reductoisomerase family. Mg(2+) serves as cofactor.

The enzyme catalyses (2R)-2,3-dihydroxy-3-methylbutanoate + NADP(+) = (2S)-2-acetolactate + NADPH + H(+). It carries out the reaction (2R,3R)-2,3-dihydroxy-3-methylpentanoate + NADP(+) = (S)-2-ethyl-2-hydroxy-3-oxobutanoate + NADPH + H(+). It participates in amino-acid biosynthesis; L-isoleucine biosynthesis; L-isoleucine from 2-oxobutanoate: step 2/4. Its pathway is amino-acid biosynthesis; L-valine biosynthesis; L-valine from pyruvate: step 2/4. Its function is as follows. Involved in the biosynthesis of branched-chain amino acids (BCAA). Catalyzes an alkyl-migration followed by a ketol-acid reduction of (S)-2-acetolactate (S2AL) to yield (R)-2,3-dihydroxy-isovalerate. In the isomerase reaction, S2AL is rearranged via a Mg-dependent methyl migration to produce 3-hydroxy-3-methyl-2-ketobutyrate (HMKB). In the reductase reaction, this 2-ketoacid undergoes a metal-dependent reduction by NADPH to yield (R)-2,3-dihydroxy-isovalerate. This chain is Ketol-acid reductoisomerase (NADP(+)), found in Pelagibacter ubique (strain HTCC1062).